Consider the following 359-residue polypeptide: Ras association domain-containing protein 7 (359 aa).

Residues 6-89 form the Ras-associating domain; the sequence is VAMELKVWVD…VQFVLRRTGP (84 aa). The interval 87-123 is disordered; that stretch reads TGPSLSGRPSSDNCPPPERCPVRASLPPKPSAIPGRE. The segment covering 89–99 has biased composition (polar residues); sequence PSLSGRPSSDN. 2 coiled-coil regions span residues 180–208 and 242–301; these read WEQE…TAEH and AAER…QQFI. Residues 339–359 form a disordered region; that stretch reads SHILVSSLSPEVPPMRQSSWR.

As to quaternary structure, interacts with MAP2K7 and GTP-bound NRAS. Post-translationally, polyubiquitinated and degraded by the proteasome upon prolonged stress stimuli.

The protein localises to the cytoplasm. Its subcellular location is the cytoskeleton. It is found in the microtubule organizing center. The protein resides in the centrosome. In terms of biological role, negatively regulates stress-induced JNK activation and apoptosis by promoting MAP2K7 phosphorylation and inhibiting its ability to activate JNK. Following prolonged stress, anti-apoptotic effect stops because of degradation of RASSF7 protein via the ubiquitin-proteasome pathway. Required for the activation of AURKB and chromosomal congression during mitosis where it stimulates microtubule polymerization. The sequence is that of Ras association domain-containing protein 7 (Rassf7) from Mus musculus (Mouse).